Here is a 111-residue protein sequence, read N- to C-terminus: Ghrelin (111 aa).

A signal peptide spans 1–26; sequence MRQMKRTAYIILLVCVLALWMDSVQA. The span at 28 to 37 shows a compositional bias: polar residues; sequence SSFLSPSQRP. Residues 28-53 form a disordered region; the sequence is SSFLSPSQRPQGKDKKPPRVGRRDSD. A lipid anchor (O-decanoyl serine; alternate) is attached at Ser29. Ser29 is lipidated: O-hexanoyl serine; alternate. The O-octanoyl serine; alternate moiety is linked to residue Ser29. Over residues 38–53 the composition is skewed to basic and acidic residues; that stretch reads QGKDKKPPRVGRRDSD. Val47 is subject to Valine amide. A propeptide spans 51-111 (removed in mature form); that stretch reads DSDGILDLFM…DLLMDTPAKE (61 aa).

This sequence belongs to the motilin family. Post-translationally, O-octanoylated by GOAT/MBOAT4. O-octanoylation or O-decanoylation is essential for activity. The O-decanoylated form ghrelin-21-C10 differs in the length of the carbon backbone of the carboxylic acid forming an ester bond with Ser-29. 44% of eel ghrelin is O-decanoylated. Highest levels in stomach and anterior intestine. Lower levels in posterior intestine, kidney and brain. Low levels in heart, head kidney and middle intestine.

Its subcellular location is the secreted. Functionally, ligand for growth hormone secretagogue receptor type 1 (GHSR). Induces the release of growth hormone from the pituitary. Has an appetite-stimulating effect, induces adiposity and stimulates gastric acid secretion. Involved in growth regulation. This Anguilla japonica (Japanese eel) protein is Ghrelin (ghrl).